The sequence spans 121 residues: Large ribosomal subunit protein uL18 (121 aa).

Belongs to the universal ribosomal protein uL18 family. Part of the 50S ribosomal subunit; part of the 5S rRNA/L5/L18/L25 subcomplex. Contacts the 5S and 23S rRNAs.

Its function is as follows. This is one of the proteins that bind and probably mediate the attachment of the 5S RNA into the large ribosomal subunit, where it forms part of the central protuberance. The sequence is that of Large ribosomal subunit protein uL18 from Paraburkholderia phymatum (strain DSM 17167 / CIP 108236 / LMG 21445 / STM815) (Burkholderia phymatum).